A 274-amino-acid chain; its full sequence is Orotidine 5'-phosphate decarboxylase (274 aa).

Lys96 (proton donor) is an active-site residue.

The protein belongs to the OMP decarboxylase family. Type 2 subfamily.

It catalyses the reaction orotidine 5'-phosphate + H(+) = UMP + CO2. It functions in the pathway pyrimidine metabolism; UMP biosynthesis via de novo pathway; UMP from orotate: step 2/2. This chain is Orotidine 5'-phosphate decarboxylase, found in Bacteroides fragilis (strain YCH46).